A 767-amino-acid polypeptide reads, in one-letter code: RNA cytosine C(5)-methyltransferase NSUN2 (767 aa).

The disordered stretch occupies residues 1–36 (MGRRSRGRRLQQQQRPEDAEDGAEGGGKRGEAGWEG). Residue Lys-46 forms a Glycyl lysine isopeptide (Lys-Gly) (interchain with G-Cter in SUMO2) linkage. The residue at position 139 (Ser-139) is a Phosphoserine; by AURKB. S-adenosyl-L-methionine-binding positions include 184-190 (CAAPGSK), Asp-215, Asp-242, and Asp-268. Catalysis depends on Cys-321, which acts as the Nucleophile. The segment at 436 to 481 (NKRQPKLQGKSAETRESTQLSPADLTEGKPTDPSKLESPSFTGTGD) is disordered. Position 456 is a phosphoserine (Ser-456). Basic and acidic residues predominate over residues 461-470 (TEGKPTDPSK). Residues Lys-464 and Lys-470 each participate in a glycyl lysine isopeptide (Lys-Gly) (interchain with G-Cter in SUMO2) cross-link. At Ser-473 the chain carries Phosphoserine. Residues Lys-511 and Lys-516 each participate in a glycyl lysine isopeptide (Lys-Gly) (interchain with G-Cter in SUMO2) cross-link. Lys-586 carries the N6-acetyllysine; alternate modification. Lys-586 carries the post-translational modification N6-malonyllysine; alternate. Residue Lys-586 forms a Glycyl lysine isopeptide (Lys-Gly) (interchain with G-Cter in SUMO2); alternate linkage. Ser-593 is subject to Phosphoserine. Glycyl lysine isopeptide (Lys-Gly) (interchain with G-Cter in SUMO2) cross-links involve residues Lys-640, Lys-654, and Lys-660. Position 718 is a phosphothreonine (Thr-718). Positions 719–730 (NESAASTGQPDN) are enriched in polar residues. The segment at 719–767 (NESAASTGQPDNDVTEGQRAGEPNSPDAEEANSPDVTAGCDPAGVHPPR) is disordered. 3 positions are modified to phosphoserine: Ser-724, Ser-743, and Ser-751.

Belongs to the class I-like SAM-binding methyltransferase superfamily. RsmB/NOP family. TRM4 subfamily. As to quaternary structure, interacts with NPM1 and NCL during interphase; interaction is disrupted following phosphorylation at Ser-139. In terms of processing, phosphorylated at Ser-139 by AURKB during mitosis, leading to abolish methyltransferase activity and the interaction with NPM1. As to expression, expressed in adult and fetal brain and in lymphoblastoid cells.

It localises to the nucleus. The protein resides in the nucleolus. It is found in the cytoplasm. Its subcellular location is the mitochondrion. The protein localises to the cytoskeleton. It localises to the spindle. The protein resides in the secreted. It is found in the extracellular exosome. It carries out the reaction cytidine(48) in tRNA + S-adenosyl-L-methionine = 5-methylcytidine(48) in tRNA + S-adenosyl-L-homocysteine + H(+). The catalysed reaction is cytidine(49) in tRNA + S-adenosyl-L-methionine = 5-methylcytidine(49) in tRNA + S-adenosyl-L-homocysteine + H(+). It catalyses the reaction cytidine(50) in tRNA + S-adenosyl-L-methionine = 5-methylcytidine(50) in tRNA + S-adenosyl-L-homocysteine + H(+). The enzyme catalyses cytidine(34) in tRNA precursor + S-adenosyl-L-methionine = 5-methylcytidine(34) in tRNA precursor + S-adenosyl-L-homocysteine + H(+). It carries out the reaction a cytidine in mRNA + S-adenosyl-L-methionine = a 5-methylcytidine in mRNA + S-adenosyl-L-homocysteine + H(+). With respect to regulation, inhibited by magnesium ions. Its function is as follows. RNA cytosine C(5)-methyltransferase that methylates cytosine to 5-methylcytosine (m5C) in various RNAs, such as tRNAs, mRNAs and some long non-coding RNAs (lncRNAs). Involved in various processes, such as epidermal stem cell differentiation, testis differentiation and maternal to zygotic transition during early development: acts by increasing protein synthesis; cytosine C(5)-methylation promoting tRNA stability and preventing mRNA decay. Methylates cytosine to 5-methylcytosine (m5C) at positions 34 and 48 of intron-containing tRNA(Leu)(CAA) precursors, and at positions 48, 49 and 50 of tRNA(Gly)(GCC) precursors. tRNA methylation is required generation of RNA fragments derived from tRNAs (tRFs). Also mediates C(5)-methylation of mitochondrial tRNAs. Catalyzes cytosine C(5)-methylation of mRNAs, leading to stabilize them and prevent mRNA decay: mRNA stabilization involves YBX1 that specifically recognizes and binds m5C-modified transcripts. Cytosine C(5)-methylation of mRNAs also regulates mRNA export: methylated transcripts are specifically recognized by THOC4/ALYREF, which mediates mRNA nucleo-cytoplasmic shuttling. Also mediates cytosine C(5)-methylation of non-coding RNAs, such as vault RNAs (vtRNAs), promoting their processing into regulatory small RNAs. Cytosine C(5)-methylation of vtRNA VTRNA1.1 promotes its processing into small-vault RNA4 (svRNA4) and regulates epidermal differentiation. May act downstream of Myc to regulate epidermal cell growth and proliferation. Required for proper spindle assembly and chromosome segregation, independently of its methyltransferase activity. In Homo sapiens (Human), this protein is RNA cytosine C(5)-methyltransferase NSUN2.